The sequence spans 468 residues: ATP synthase subunit beta (468 aa).

Residue 155 to 162 participates in ATP binding; that stretch reads GGAGVGKT.

Belongs to the ATPase alpha/beta chains family. F-type ATPases have 2 components, CF(1) - the catalytic core - and CF(0) - the membrane proton channel. CF(1) has five subunits: alpha(3), beta(3), gamma(1), delta(1), epsilon(1). CF(0) has three main subunits: a(1), b(2) and c(9-12). The alpha and beta chains form an alternating ring which encloses part of the gamma chain. CF(1) is attached to CF(0) by a central stalk formed by the gamma and epsilon chains, while a peripheral stalk is formed by the delta and b chains.

Its subcellular location is the cell membrane. It carries out the reaction ATP + H2O + 4 H(+)(in) = ADP + phosphate + 5 H(+)(out). Functionally, produces ATP from ADP in the presence of a proton gradient across the membrane. The catalytic sites are hosted primarily by the beta subunits. This Streptococcus uberis (strain ATCC BAA-854 / 0140J) protein is ATP synthase subunit beta.